Here is a 167-residue protein sequence, read N- to C-terminus: Large ribosomal subunit protein uL10 (167 aa).

It belongs to the universal ribosomal protein uL10 family. As to quaternary structure, part of the ribosomal stalk of the 50S ribosomal subunit. The N-terminus interacts with L11 and the large rRNA to form the base of the stalk. The C-terminus forms an elongated spine to which L12 dimers bind in a sequential fashion forming a multimeric L10(L12)X complex.

Functionally, forms part of the ribosomal stalk, playing a central role in the interaction of the ribosome with GTP-bound translation factors. In Ligilactobacillus salivarius (strain UCC118) (Lactobacillus salivarius), this protein is Large ribosomal subunit protein uL10.